A 28-amino-acid chain; its full sequence is ALWKDLLKNVGIAAGKAVLNKVTDMVNQ.

Glutamine 28 carries the post-translational modification Glutamine amide.

Expressed by the skin glands.

It localises to the secreted. In terms of biological role, has antimicrobial activity. The chain is Dermaseptin-1 from Phyllomedusa tomopterna (Tiger-striped leaf frog).